The primary structure comprises 27 residues: Morintide mO5 (27 aa).

Positions 1–27 (NGLCCSQYGFCGTTSQYCSRANGCQSN) constitute a Chitin-binding type-1 domain. A disulfide bridge links C4 with C18.

As to expression, seeds (at protein level).

In terms of biological role, chitin-binding protein which functions in defense against chitin-containing fungal pathogens. This chain is Morintide mO5, found in Moringa oleifera (Horseradish tree).